The following is a 178-amino-acid chain: ATP synthase subunit delta (178 aa).

This sequence belongs to the ATPase delta chain family. F-type ATPases have 2 components, F(1) - the catalytic core - and F(0) - the membrane proton channel. F(1) has five subunits: alpha(3), beta(3), gamma(1), delta(1), epsilon(1). F(0) has three main subunits: a(1), b(2) and c(10-14). The alpha and beta chains form an alternating ring which encloses part of the gamma chain. F(1) is attached to F(0) by a central stalk formed by the gamma and epsilon chains, while a peripheral stalk is formed by the delta and b chains.

It localises to the cell inner membrane. F(1)F(0) ATP synthase produces ATP from ADP in the presence of a proton or sodium gradient. F-type ATPases consist of two structural domains, F(1) containing the extramembraneous catalytic core and F(0) containing the membrane proton channel, linked together by a central stalk and a peripheral stalk. During catalysis, ATP synthesis in the catalytic domain of F(1) is coupled via a rotary mechanism of the central stalk subunits to proton translocation. In terms of biological role, this protein is part of the stalk that links CF(0) to CF(1). It either transmits conformational changes from CF(0) to CF(1) or is implicated in proton conduction. The sequence is that of ATP synthase subunit delta from Nitrosospira multiformis (strain ATCC 25196 / NCIMB 11849 / C 71).